The chain runs to 288 residues: Acetyl-coenzyme A carboxylase carboxyl transferase subunit beta (288 aa).

The CoA carboxyltransferase N-terminal domain occupies 30–288 (IMTKCPKCKK…KMHQEVKTNA (259 aa)). Residues Cys-34, Cys-37, Cys-53, and Cys-56 each contribute to the Zn(2+) site. Residues 34-56 (CPKCKKIMYTKELAENLNVCFNC) form a C4-type zinc finger.

Belongs to the AccD/PCCB family. Acetyl-CoA carboxylase is a heterohexamer composed of biotin carboxyl carrier protein (AccB), biotin carboxylase (AccC) and two subunits each of ACCase subunit alpha (AccA) and ACCase subunit beta (AccD). Zn(2+) is required as a cofactor.

It is found in the cytoplasm. The enzyme catalyses N(6)-carboxybiotinyl-L-lysyl-[protein] + acetyl-CoA = N(6)-biotinyl-L-lysyl-[protein] + malonyl-CoA. It participates in lipid metabolism; malonyl-CoA biosynthesis; malonyl-CoA from acetyl-CoA: step 1/1. Its function is as follows. Component of the acetyl coenzyme A carboxylase (ACC) complex. Biotin carboxylase (BC) catalyzes the carboxylation of biotin on its carrier protein (BCCP) and then the CO(2) group is transferred by the transcarboxylase to acetyl-CoA to form malonyl-CoA. This is Acetyl-coenzyme A carboxylase carboxyl transferase subunit beta from Staphylococcus saprophyticus subsp. saprophyticus (strain ATCC 15305 / DSM 20229 / NCIMB 8711 / NCTC 7292 / S-41).